The sequence spans 332 residues: Beta-hexosaminidase (332 aa).

Residues Asp62, Arg70, Arg131, and 161 to 162 (KH) contribute to the substrate site. The Proton donor/acceptor role is filled by His174. The active-site Nucleophile is the Asp244.

This sequence belongs to the glycosyl hydrolase 3 family. NagZ subfamily.

The protein localises to the cytoplasm. The enzyme catalyses Hydrolysis of terminal non-reducing N-acetyl-D-hexosamine residues in N-acetyl-beta-D-hexosaminides.. Its pathway is cell wall biogenesis; peptidoglycan recycling. Functionally, plays a role in peptidoglycan recycling by cleaving the terminal beta-1,4-linked N-acetylglucosamine (GlcNAc) from peptide-linked peptidoglycan fragments, giving rise to free GlcNAc, anhydro-N-acetylmuramic acid and anhydro-N-acetylmuramic acid-linked peptides. The chain is Beta-hexosaminidase from Pseudomonas aeruginosa (strain LESB58).